Consider the following 1010-residue polypeptide: Collagen, type I, alpha 1b (1010 aa).

Over residues 1–24 (SSGPPQPGPMGPMGPRGPPGPPGS) the composition is skewed to pro residues. The interval 1–969 (SSGPPQPGPM…PDGTQKSPAR (969 aa)) is disordered. Residues 25-48 (SGPQGFTGPPGEPGEPGASGAMGS) show a composition bias toward low complexity. Residues 58 to 72 (NGDDGEPGKPGRPGE) show a composition bias toward basic and acidic residues. A compositionally biased stretch (low complexity) spans 73–82 (RGAAGPQGAR). A compositionally biased stretch (pro residues) spans 145–159 (GGPPGPTGPAGPPGF). Composition is skewed to gly residues over residues 160-179 (PGGAGVKGETGPAGGRGNEG) and 203-212 (GTDGGPGAKG). Low complexity-rich tracts occupy residues 213–268 (SPGA…PGPA) and 300–310 (ERGAPGARGFP). The span at 311–323 (GADGGAGGKGAPG) shows a compositional bias: gly residues. Composition is skewed to low complexity over residues 324–343 (ERGATGESGSPGAPGAPGSK) and 405–448 (PAGA…APGE). Gly residues-rich tracts occupy residues 468–477 (GAPGLGGPTG), 486–495 (GAPGGLGAPG), and 519–528 (GGKGGDGAPG). Low complexity-rich tracts occupy residues 559–568 (VAGPTGPRGA) and 581–596 (AGFAGPPGADGQPGAK). Composition is skewed to gly residues over residues 609-618 (GAPGPGGPVG) and 633-642 (GARGGAGPPG). 3 stretches are compositionally biased toward low complexity: residues 643–662 (ATGFPGPAGRVGPSGPAGAA), 679–701 (ETGAAGRPGEAGAAGAPGPSGEK), and 796–805 (APGAVGPSGK). Residues 834-847 (KGDRGEAGEAGDRG) show a composition bias toward basic and acidic residues. The span at 872-900 (PAGASGPAGPRGPAGSNGAAGKDGMNGLP) shows a compositional bias: low complexity. Pro residues predominate over residues 918–933 (AGPPGPPGPAGPPGPP). In terms of domain architecture, Fibrillar collagen NC1 spans 982–1010 (RLPLLDLAPMDVGAPDQEFGVEVGPVCFL).

It belongs to the fibrillar collagen family.

The protein localises to the secreted. The protein resides in the extracellular space. It localises to the extracellular matrix. This chain is Collagen, type I, alpha 1b, found in Epinephelus marginatus (Dusky grouper).